Reading from the N-terminus, the 438-residue chain is Coenzyme A disulfide reductase (438 aa).

FAD is bound at residue 8–33; that stretch reads GAVAGGATCASQIRRLDKESDIIIFE. The substrate site is built by Thr15, Gln19, Arg22, Ser39, and Asn42. Cys43 serves as the catalytic Nucleophile. Catalysis depends on Cys43, which acts as the Redox-active. Lys71 provides a ligand contact to substrate. 151-166 contributes to the NADP(+) binding site; sequence VLVIGAGYVSLEVLEN. An FAD-binding site is contributed by 267–277; sequence TNVPNIYAIGD. His299 contributes to the substrate binding site. Residue Tyr419 participates in FAD binding. Lys427 is a substrate binding site.

This sequence belongs to the class-III pyridine nucleotide-disulfide oxidoreductase family. Homodimer. FAD is required as a cofactor.

The enzyme catalyses NADP(+) + 2 CoA = CoA-disulfide + NADPH + H(+). In terms of biological role, catalyzes specifically the NADPH-dependent reduction of coenzyme A disulfide. The chain is Coenzyme A disulfide reductase from Staphylococcus aureus (strain JH1).